Here is a 132-residue protein sequence, read N- to C-terminus: Small ribosomal subunit protein uS8 (132 aa).

Belongs to the universal ribosomal protein uS8 family. Part of the 30S ribosomal subunit. Contacts proteins S5 and S12.

Its function is as follows. One of the primary rRNA binding proteins, it binds directly to 16S rRNA central domain where it helps coordinate assembly of the platform of the 30S subunit. The sequence is that of Small ribosomal subunit protein uS8 from Streptomyces avermitilis (strain ATCC 31267 / DSM 46492 / JCM 5070 / NBRC 14893 / NCIMB 12804 / NRRL 8165 / MA-4680).